The following is a 269-amino-acid chain: uncharacterized protein (269 aa).

Positions 181–191 (QKKELSPHEIA) are enriched in basic and acidic residues. The segment at 181 to 203 (QKKELSPHEIAESPSSHSTSPMG) is disordered. Residues 193 to 202 (SPSSHSTSPM) are compositionally biased toward polar residues. The residue at position 200 (S200) is a Phosphoserine.

This is an uncharacterized protein from Schizosaccharomyces pombe (strain 972 / ATCC 24843) (Fission yeast).